A 228-amino-acid polypeptide reads, in one-letter code: 7-cyano-7-deazaguanine synthase (228 aa).

9–19 (LSGGPDSTTVL) serves as a coordination point for ATP. Residues C193, C203, C206, and C209 each coordinate Zn(2+).

Belongs to the QueC family. Zn(2+) is required as a cofactor.

It carries out the reaction 7-carboxy-7-deazaguanine + NH4(+) + ATP = 7-cyano-7-deazaguanine + ADP + phosphate + H2O + H(+). The protein operates within purine metabolism; 7-cyano-7-deazaguanine biosynthesis. Its function is as follows. Catalyzes the ATP-dependent conversion of 7-carboxy-7-deazaguanine (CDG) to 7-cyano-7-deazaguanine (preQ(0)). The sequence is that of 7-cyano-7-deazaguanine synthase from Rickettsia africae (strain ESF-5).